A 495-amino-acid polypeptide reads, in one-letter code: Glutamate--tRNA ligase (495 aa).

Residues 12-22 (PSPTGHLHIGN) carry the 'HIGH' region motif. Positions 259 to 263 (KLSKR) match the 'KMSKS' region motif. An ATP-binding site is contributed by K262.

This sequence belongs to the class-I aminoacyl-tRNA synthetase family. Glutamate--tRNA ligase type 1 subfamily. In terms of assembly, monomer.

The protein resides in the cytoplasm. The catalysed reaction is tRNA(Glu) + L-glutamate + ATP = L-glutamyl-tRNA(Glu) + AMP + diphosphate. In terms of biological role, catalyzes the attachment of glutamate to tRNA(Glu) in a two-step reaction: glutamate is first activated by ATP to form Glu-AMP and then transferred to the acceptor end of tRNA(Glu). The protein is Glutamate--tRNA ligase of Latilactobacillus sakei subsp. sakei (strain 23K) (Lactobacillus sakei subsp. sakei).